A 214-amino-acid polypeptide reads, in one-letter code: Cdc42 effector protein 2 (214 aa).

N-acetylserine is present on Ser-2. In terms of domain architecture, CRIB spans 30 to 44 (ISPPLGDFRHTIHIG). Ser-31, Ser-101, Ser-137, Ser-141, and Ser-145 each carry phosphoserine. Positions 119 to 177 (LTLPTAQAPPKPPRLHLESPQPSPQPSPQGAGNVDVWRIPEAGSPHNGMSPEPEAEEPF) are disordered.

This sequence belongs to the BORG/CEP family. Interacts with CDC42 and RHOQ in a GTP-dependent manner, and with SEPT7.

Its subcellular location is the endomembrane system. The protein localises to the cytoplasm. It localises to the cytoskeleton. Probably involved in the organization of the actin cytoskeleton. May act downstream of CDC42 to induce actin filament assembly leading to cell shape changes. Induces pseudopodia formation in fibroblasts in a CDC42-dependent manner. In Mus musculus (Mouse), this protein is Cdc42 effector protein 2 (Cdc42ep2).